The chain runs to 711 residues: Choline transporter-like protein 2 (711 aa).

At 1 to 33 (MGDERPHYYGKHGTPQKYDPTFKGPIYNRGCTD) the chain is on the cytoplasmic side. T14 is modified (phosphothreonine). A helical transmembrane segment spans residues 34–54 (VICCVFLLVAIVGYVAVGIIA). The Extracellular portion of the chain corresponds to 55–232 (WTHGDPRKVI…RIFEDYTVSW (178 aa)). Residues N187 and N200 are each glycosylated (N-linked (GlcNAc...) asparagine). A helical transmembrane segment spans residues 233-253 (YWIIIGLVIAMAMSLLFIILL). The Cytoplasmic segment spans residues 254 to 256 (RFL). Residues 257 to 277 (AGIMVWVMIIMVILVLGYGIF) traverse the membrane as a helical segment. Residues 278–315 (HCYMEYSRLRGEAGSDVSLVDLGFQTDFRVYLHLRQTW) are Extracellular-facing. Residues 316–336 (LAFMIILSILEVIIILLLIFL) form a helical membrane-spanning segment. At 337–364 (RKRILIAIALIKEASRAVGYVMCTMLYP) the chain is on the cytoplasmic side. Residues 365–385 (LVTFFLLCLCIAYWASTAVFL) traverse the membrane as a helical segment. Residues 386–440 (STSNEAVYKIFDDGLCPFTAKTCNPETFPSSNESRQCPNARCQFAFYGGESGYHR) are Extracellular-facing. N417 is a glycosylation site (N-linked (GlcNAc...) asparagine). Residues 441–461 (ALLGLQIFNAFMFFWLANFVL) traverse the membrane as a helical segment. The Cytoplasmic segment spans residues 462-504 (ALGQVTLAGAFASYYWALRKPDDLPAFPLFSAFGRALRYHTGS). A helical transmembrane segment spans residues 505–525 (LAFGALILAIVQIIRVILEYL). At 526 to 563 (DQRLKAAENKFAKCLMTCLKCCFWCLEKFIKFLNRNAY) the chain is on the extracellular side. Residues 564–584 (IMIAIYGTNFCTSARNAFFLL) traverse the membrane as a helical segment. The Cytoplasmic portion of the chain corresponds to 585-599 (MRNIIRVAVLDKVTD). The chain crosses the membrane as a helical span at residues 600–620 (FLFLLGKLLIVGSVGILAFFF). The Extracellular portion of the chain corresponds to 621–638 (FTHRIRIVQDTAPPLNYY). The chain crosses the membrane as a helical span at residues 639 to 659 (WVPILTVIVGSYLIAHGFFSV). Topologically, residues 660–711 (YGMCVDTLFLCFCEDLERNDGSQERPYFMSPELRDILLKGSAEEGKRAEAEE) are cytoplasmic.

This sequence belongs to the CTL (choline transporter-like) family. Interacts with COCH. Post-translationally, N-glycosylated.

It is found in the cell membrane. It localises to the mitochondrion outer membrane. The enzyme catalyses choline(out) + n H(+)(in) = choline(in) + n H(+)(out). It catalyses the reaction ethanolamine(out) + n H(+)(in) = ethanolamine(in) + n H(+)(out). Functionally, choline/H+ antiporter, mainly in mitochodria. Also acts as a low-affinity ethanolamine/H+ antiporter, regulating the supply of extracellular ethanolamine (Etn) for the CDP-Etn pathway, redistribute intracellular Etn and balance the CDP-Cho and CDP-Etn arms of the Kennedy pathway. The sequence is that of Choline transporter-like protein 2 (SLC44A2) from Pongo abelii (Sumatran orangutan).